The sequence spans 789 residues: Polyribonucleotide nucleotidyltransferase (789 aa).

Positions 494 and 500 each coordinate Mg(2+). The KH domain occupies 561-620 (PRIESIFINKDKIRNVIGSGGKNIREICEKTGARVEIMQDGTVMIYAINNDAVEYAKNMI). The S1 motif domain occupies 630–697 (GKVFDGTVIE…DREYVQLSMR (68 aa)). Positions 709–789 (GELYNIRKTN…NEVPRKPRFF (81 aa)) are disordered. Positions 737 to 749 (SEKKRRGSGRSRR) are enriched in basic residues. Residues 763-780 (NNGFGNGNRSFNDNRNGN) are compositionally biased toward low complexity.

This sequence belongs to the polyribonucleotide nucleotidyltransferase family. Requires Mg(2+) as cofactor.

It localises to the cytoplasm. The enzyme catalyses RNA(n+1) + phosphate = RNA(n) + a ribonucleoside 5'-diphosphate. In terms of biological role, involved in mRNA degradation. Catalyzes the phosphorolysis of single-stranded polyribonucleotides processively in the 3'- to 5'-direction. This Ehrlichia ruminantium (strain Welgevonden) protein is Polyribonucleotide nucleotidyltransferase.